The following is a 191-amino-acid chain: dCTP deaminase (191 aa).

DCTP is bound by residues 112–117 (KSTYAR), 136–138 (TLE), Q157, Y173, and Q183. The Proton donor/acceptor role is filled by E138.

It belongs to the dCTP deaminase family. Homotrimer.

The catalysed reaction is dCTP + H2O + H(+) = dUTP + NH4(+). It participates in pyrimidine metabolism; dUMP biosynthesis; dUMP from dCTP (dUTP route): step 1/2. In terms of biological role, catalyzes the deamination of dCTP to dUTP. This Psychrobacter sp. (strain PRwf-1) protein is dCTP deaminase.